The following is a 302-amino-acid chain: UDP-3-O-acyl-N-acetylglucosamine deacetylase (302 aa).

Zn(2+) contacts are provided by His-82, His-238, and Asp-242. His-265 (proton donor) is an active-site residue.

This sequence belongs to the LpxC family. The cofactor is Zn(2+).

It carries out the reaction a UDP-3-O-[(3R)-3-hydroxyacyl]-N-acetyl-alpha-D-glucosamine + H2O = a UDP-3-O-[(3R)-3-hydroxyacyl]-alpha-D-glucosamine + acetate. It participates in glycolipid biosynthesis; lipid IV(A) biosynthesis; lipid IV(A) from (3R)-3-hydroxytetradecanoyl-[acyl-carrier-protein] and UDP-N-acetyl-alpha-D-glucosamine: step 2/6. Functionally, catalyzes the hydrolysis of UDP-3-O-myristoyl-N-acetylglucosamine to form UDP-3-O-myristoylglucosamine and acetate, the committed step in lipid A biosynthesis. The polypeptide is UDP-3-O-acyl-N-acetylglucosamine deacetylase (Leptospira biflexa serovar Patoc (strain Patoc 1 / Ames)).